The following is a 290-amino-acid chain: Membrane-spanning 4-domains subfamily A member 8 (290 aa).

The segment covering M1–K21 has biased composition (polar residues). Residues M1–P25 form a disordered region. The Cytoplasmic segment spans residues M1 to Q108. The helical transmembrane segment at V109–I129 threads the bilayer. The Extracellular portion of the chain corresponds to T130–P138. A helical transmembrane segment spans residues V139–L159. Topologically, residues S160 to N174 are cytoplasmic. Residues G175–I195 traverse the membrane as a helical segment. The Extracellular segment spans residues T196–T220. A helical membrane pass occupies residues G221 to V241. The Cytoplasmic segment spans residues S242 to R290.

It belongs to the MS4A family. In terms of tissue distribution, expressed strongly in intestine and colon and minimally in lung and ovary.

The protein localises to the membrane. Functionally, may be involved in signal transduction as a component of a multimeric receptor complex. This is Membrane-spanning 4-domains subfamily A member 8 (Ms4a8) from Mus musculus (Mouse).